Here is a 167-residue protein sequence, read N- to C-terminus: NAD(P)H-quinone oxidoreductase subunit I, chloroplastic (167 aa).

4Fe-4S ferredoxin-type domains are found at residues 55 to 84 (GRIH…VDWK) and 95 to 124 (LNYS…MTEE). Positions 64, 67, 70, 74, 104, 107, 110, and 114 each coordinate [4Fe-4S] cluster.

It belongs to the complex I 23 kDa subunit family. In terms of assembly, NDH is composed of at least 16 different subunits, 5 of which are encoded in the nucleus. Requires [4Fe-4S] cluster as cofactor.

The protein resides in the plastid. It localises to the chloroplast thylakoid membrane. It carries out the reaction a plastoquinone + NADH + (n+1) H(+)(in) = a plastoquinol + NAD(+) + n H(+)(out). The enzyme catalyses a plastoquinone + NADPH + (n+1) H(+)(in) = a plastoquinol + NADP(+) + n H(+)(out). Functionally, NDH shuttles electrons from NAD(P)H:plastoquinone, via FMN and iron-sulfur (Fe-S) centers, to quinones in the photosynthetic chain and possibly in a chloroplast respiratory chain. The immediate electron acceptor for the enzyme in this species is believed to be plastoquinone. Couples the redox reaction to proton translocation, and thus conserves the redox energy in a proton gradient. The polypeptide is NAD(P)H-quinone oxidoreductase subunit I, chloroplastic (Jasminum nudiflorum (Winter jasmine)).